We begin with the raw amino-acid sequence, 118 residues long: Basic leucine zipper transcriptional factor ATF-like 3 (118 aa).

The segment at Met1 to Val69 is disordered. Phosphoserine is present on residues Ser2 and Ser24. The bZIP domain maps to Asp28 to His91. The interval Arg30–Lys55 is basic motif. Over residues Gln51–Val69 the composition is skewed to basic and acidic residues. The interval Leu56 to Leu84 is leucine-zipper.

It belongs to the bZIP family. In terms of assembly, heterodimer; heterodimerizes with JUN family proteins. Interacts with JUN. In terms of tissue distribution, highly expressed in CD8-alpha(+) classical dendritic cells (cDCs), with low to absent expression in other immune cells and non-immune tissues.

It is found in the nucleus. Functionally, AP-1 family transcription factor that controls the differentiation of CD8(+) thymic conventional dendritic cells in the immune system. Acts via the formation of a heterodimer with JUN family proteins that recognizes and binds DNA sequence 5'-TGA[CG]TCA-3' and regulates expression of target genes. Required for development of CD8-alpha(+) classical dendritic cells (cDCs) and related CD103(+) dendritic cells that cross-present antigens to CD8 T-cells and produce interleukin-12 (IL12) in response to pathogens. This Mus musculus (Mouse) protein is Basic leucine zipper transcriptional factor ATF-like 3 (Batf3).